Consider the following 59-residue polypeptide: Putative potassium channel toxin Ts24 (59 aa).

Residues 1–22 (MKAFYGILIIFILISMIHLSQQ) form the signal peptide. Disulfide bonds link C29–C50, C35–C55, and C39–C57.

It belongs to the short scorpion toxin superfamily. Potassium channel inhibitor family. Alpha-KTx 04 subfamily. As to expression, expressed by the venom gland.

Its subcellular location is the secreted. Potently blocks Kv1.1/KCNA1 (85%), Kv1.2/KCNA2 (91%), Kv1.3/KCNA3 (89%), Kv1.6/KCNA6 (94%), and Shaker (97%). This chain is Putative potassium channel toxin Ts24, found in Tityus serrulatus (Brazilian scorpion).